We begin with the raw amino-acid sequence, 478 residues long: Phenylalanine--tRNA ligase alpha subunit (478 aa).

Residues threonine 318, 357–359 (QLE), and tyrosine 397 contribute to the L-phenylalanine site. Glutamate 399 contacts Mg(2+). Phenylalanine 422 contributes to the L-phenylalanine binding site.

The protein belongs to the class-II aminoacyl-tRNA synthetase family. Phe-tRNA synthetase alpha subunit type 2 subfamily. Tetramer of two alpha and two beta subunits. The cofactor is Mg(2+).

It is found in the cytoplasm. It carries out the reaction tRNA(Phe) + L-phenylalanine + ATP = L-phenylalanyl-tRNA(Phe) + AMP + diphosphate + H(+). This is Phenylalanine--tRNA ligase alpha subunit from Methanospirillum hungatei JF-1 (strain ATCC 27890 / DSM 864 / NBRC 100397 / JF-1).